A 402-amino-acid polypeptide reads, in one-letter code: Serine/threonine transporter SstT (402 aa).

A run of 9 helical transmembrane segments spans residues 19–39, 43–63, 86–106, 138–158, 179–199, 212–232, 287–307, 327–347, and 354–374; these read IGVV…AIGL, LFVG…VISA, TFAA…TLIL, AITE…GLAM, VVKW…FTSI, LLIL…NPII, IPLG…ILTL, VVAA…LLLI, and FGIS…VGVI.

Belongs to the dicarboxylate/amino acid:cation symporter (DAACS) (TC 2.A.23) family.

It is found in the cell membrane. It catalyses the reaction L-serine(in) + Na(+)(in) = L-serine(out) + Na(+)(out). It carries out the reaction L-threonine(in) + Na(+)(in) = L-threonine(out) + Na(+)(out). Its function is as follows. Involved in the import of serine and threonine into the cell, with the concomitant import of sodium (symport system). This Streptococcus agalactiae serotype Ia (strain ATCC 27591 / A909 / CDC SS700) protein is Serine/threonine transporter SstT.